The primary structure comprises 454 residues: MSRLFGTDGVRGLANGLLTAELAMQLAQAAAVVLGHDRTTDGKRPRAVVARDPRASGEFLAAAVEAGLSSSGIDVYDAGVLPTPAAAYLVADLDADFGVMLSASHNPAPDNGIKFFARGGQKLPDDVEDAIEAQLGKEPQRPVGADVGRIQRFSDAEDRYIVHLLGTLPKRLEGLKVVLDCAHGAASGCSPQVFKDAGAEVVVIGAEPDGLNINDGVGSTHLGPLKEAVVKHGADLGVAHDGDADRCLAVDHEGNEVDGDQIMAILALALKEAGKLKDNILVATVMSNLGLKIALRDAGITIRETGVGDRYVLEEMRDGGYNLGGEQSGHVIFSDFATTGDGVLTGLQLAAQVALTGRSLKDLSSAMTKLPQLMINVKDVDKARAATDEGVAEAVAAAELELGETGRVLLRPSGTEALVRVMVEAADMETAERICKGLAAVVKERLGAPSELAV.

Ser-104 acts as the Phosphoserine intermediate in catalysis. Residues Ser-104, Asp-241, Asp-243, and Asp-245 each contribute to the Mg(2+) site. Ser-104 is subject to Phosphoserine.

The protein belongs to the phosphohexose mutase family. The cofactor is Mg(2+). In terms of processing, activated by phosphorylation.

It catalyses the reaction alpha-D-glucosamine 1-phosphate = D-glucosamine 6-phosphate. Functionally, catalyzes the conversion of glucosamine-6-phosphate to glucosamine-1-phosphate. This chain is Phosphoglucosamine mutase, found in Paenarthrobacter aurescens (strain TC1).